Reading from the N-terminus, the 201-residue chain is MSKVLVLKSSILAGYSQSNQLSDYFVEQWREKHSADEITVRDLAANPVPVLDGELVGALRPSDAPLTPRQQDALSLSDELIAELQAHDVIVIAAPMYNFNIPTQLKNYFDLVARAGVTFRYTEKGPEGLVTGKRAIVLTSRGGIHKDTPTDLVTPYLSLFLGFIGITDVNFVFAEGVAYGPEMATKAQSDAKAAIDALVSA.

FMN contacts are provided by residues serine 10, 16–18 (SQS), 96–99 (MYNF), and 140–143 (SRGG).

The protein belongs to the azoreductase type 1 family. Homodimer. It depends on FMN as a cofactor.

It carries out the reaction 2 a quinone + NADH + H(+) = 2 a 1,4-benzosemiquinone + NAD(+). It catalyses the reaction N,N-dimethyl-1,4-phenylenediamine + anthranilate + 2 NAD(+) = 2-(4-dimethylaminophenyl)diazenylbenzoate + 2 NADH + 2 H(+). Its function is as follows. Quinone reductase that provides resistance to thiol-specific stress caused by electrophilic quinones. Functionally, also exhibits azoreductase activity. Catalyzes the reductive cleavage of the azo bond in aromatic azo compounds to the corresponding amines. The sequence is that of FMN-dependent NADH:quinone oxidoreductase from Cronobacter sakazakii (strain ATCC BAA-894) (Enterobacter sakazakii).